The following is a 294-amino-acid chain: Farnesyl diphosphate synthase (294 aa).

3 residues coordinate isopentenyl diphosphate: Lys45, Arg48, and His77. Residues Asp84 and Asp90 each contribute to the Mg(2+) site. Arg95 provides a ligand contact to (2E)-geranyl diphosphate. Isopentenyl diphosphate is bound at residue Arg96. Residues Lys181, Thr182, and Gln220 each coordinate (2E)-geranyl diphosphate.

Belongs to the FPP/GGPP synthase family. Requires Mg(2+) as cofactor.

It localises to the cytoplasm. It carries out the reaction isopentenyl diphosphate + (2E)-geranyl diphosphate = (2E,6E)-farnesyl diphosphate + diphosphate. This is Farnesyl diphosphate synthase (ispA) from Buchnera aphidicola subsp. Schizaphis graminum (strain Sg).